The primary structure comprises 664 residues: MFQDNPLLAQLKQQIQENLPKKEGTIKATEKGFGFLEVDSKTSFFIPPAYMKKCMHGDKVIAIIRTENEREVAEPQELVEQMLNRFIGRVKMFKGKLNVVPDHPQLKKMSLKAKTKKGLNPQEFAEGDWVVGHLIRHPLKDDNGFFVEISEKITDADDKIAPWWVTLAENDLPNSEPAGIDDWQIKDDADLERIDMTHIPFVTIDGESTKDMDDALYAKKNDAGDFELTIAIADPTAYITPDDEMDKVARERGFTIYLPGRNIPMLPRDLADELCSLIEGEIRPALCCTVTVSKDGVIGDDIQFFAANIKSHARLAYDNVSDWLETGSCEKWQPSEEIAAIVRDLYEFSQARAEWREKNAVVFPDRPDYRFELSEDNDVVAIHADMRRSANRLVEESMITANICAGKTLQAHFGTGVFNCHAGFKPEKIADVVELVNPEGTLEFTAESIATREGFAALRRWLSKQETTYLDNRIRKFQTYSEVSNQPLPHYAMGLDIYATWTSPIRKYGDMINHRMLKALILNKEPVQKPDDSVGEELALHRKHHKIAERNVADWLYARTLADAPENQTLFTGEIFDINRAGMRIRLLENGAAAFIPGSLIIDNKERIECNGDLGTVSIDKEVVYKLGDVLEVVLADVNQENRSLVAKPTQVFAELPVVEETQN.

One can recognise an RNB domain in the interval 193-521; the sequence is RIDMTHIPFV…INHRMLKALI (329 aa). The S1 motif domain occupies 568-650; it reads QTLFTGEIFD…ENRSLVAKPT (83 aa).

The protein belongs to the RNR ribonuclease family. RNase II subfamily.

The protein localises to the cytoplasm. The enzyme catalyses Exonucleolytic cleavage in the 3'- to 5'-direction to yield nucleoside 5'-phosphates.. Functionally, involved in mRNA degradation. Hydrolyzes single-stranded polyribonucleotides processively in the 3' to 5' direction. The chain is Exoribonuclease 2 from Vibrio vulnificus (strain YJ016).